A 302-amino-acid polypeptide reads, in one-letter code: Ethylmalonyl-CoA decarboxylase (302 aa).

This sequence belongs to the enoyl-CoA hydratase/isomerase family.

Its subcellular location is the cytoplasm. The protein resides in the cytosol. The enzyme catalyses (2S)-ethylmalonyl-CoA + H(+) = butanoyl-CoA + CO2. It catalyses the reaction (S)-methylmalonyl-CoA + H(+) = propanoyl-CoA + CO2. The catalysed reaction is (2R)-ethylmalonyl-CoA + H(+) = butanoyl-CoA + CO2. In terms of biological role, decarboxylates ethylmalonyl-CoA, a potentially toxic metabolite, to form butyryl-CoA, suggesting it might be involved in metabolite proofreading. Acts preferentially on (S)-ethylmalonyl-CoA but also has some activity on the (R)-isomer. Also has methylmalonyl-CoA decarboxylase activity at lower level. The polypeptide is Ethylmalonyl-CoA decarboxylase (echdc1) (Danio rerio (Zebrafish)).